The primary structure comprises 410 residues: Peptidase T (410 aa).

His-79 contacts Zn(2+). Asp-81 is a catalytic residue. Residue Asp-142 coordinates Zn(2+). The active-site Proton acceptor is the Glu-176. Residues Glu-177, Asp-199, and His-381 each coordinate Zn(2+).

It belongs to the peptidase M20B family. It depends on Zn(2+) as a cofactor.

The protein localises to the cytoplasm. It catalyses the reaction Release of the N-terminal residue from a tripeptide.. Its function is as follows. Cleaves the N-terminal amino acid of tripeptides. This chain is Peptidase T, found in Brevibacillus brevis (strain 47 / JCM 6285 / NBRC 100599).